A 135-amino-acid polypeptide reads, in one-letter code: MNRVKSREYLLQLAYQMEITSETALETFNSFMENEDISKDDLDLAYIKSGLLGIEENKEKLDSLIESQLVKWKLNRISKVNLSILRISTYEILFAEDVPGKVSINEAIELCKKYSDNKSVSFINGVLDKVYKNIK.

The protein belongs to the NusB family.

Involved in transcription antitermination. Required for transcription of ribosomal RNA (rRNA) genes. Binds specifically to the boxA antiterminator sequence of the ribosomal RNA (rrn) operons. The sequence is that of Transcription antitermination protein NusB from Clostridium perfringens (strain SM101 / Type A).